Reading from the N-terminus, the 251-residue chain is Pyrroloquinoline-quinone synthase (251 aa).

The protein belongs to the PqqC family.

The enzyme catalyses 6-(2-amino-2-carboxyethyl)-7,8-dioxo-1,2,3,4,7,8-hexahydroquinoline-2,4-dicarboxylate + 3 O2 = pyrroloquinoline quinone + 2 H2O2 + 2 H2O + H(+). It functions in the pathway cofactor biosynthesis; pyrroloquinoline quinone biosynthesis. Its function is as follows. Ring cyclization and eight-electron oxidation of 3a-(2-amino-2-carboxyethyl)-4,5-dioxo-4,5,6,7,8,9-hexahydroquinoline-7,9-dicarboxylic-acid to PQQ. The sequence is that of Pyrroloquinoline-quinone synthase from Pseudomonas syringae pv. syringae (strain B728a).